The following is an 805-amino-acid chain: Mediator of RNA polymerase II transcription subunit 25 (805 aa).

Disordered stretches follow at residues 430-455 (GSAQ…GQTV) and 786-805 (SQSQ…GFMN). Composition is skewed to low complexity over residues 438 to 451 (SAPS…PSMS) and 786 to 795 (SQSQGSSQGL).

The protein belongs to the Mediator complex subunit 25 family. As to quaternary structure, interacts with MYC2 (via N-terminus). MED25 competes with JAZ7 for binding to MYC2.

Component of the Mediator complex, a coactivator involved in the regulated transcription of nearly all RNA polymerase II-dependent genes. Mediator functions as a bridge to convey information from gene-specific regulatory proteins to the basal RNA polymerase II transcription machinery. Mediator is recruited to promoters by direct interactions with regulatory proteins and serves as a scaffold for the assembly of a functional pre-initiation complex with RNA polymerase II and the general transcription factors. Plays a positive role in wound-induced activation of jasmonate-responsive genes whose promoters are targeted by MYC2. The polypeptide is Mediator of RNA polymerase II transcription subunit 25 (Solanum lycopersicum (Tomato)).